A 395-amino-acid polypeptide reads, in one-letter code: Phosphoglycerate kinase (395 aa).

Residues Asp20–Asn22, Arg35, His58–Arg61, Arg117, and Arg150 each bind substrate. Residues Lys200, Glu322, and Gly352–Thr355 contribute to the ATP site.

This sequence belongs to the phosphoglycerate kinase family. In terms of assembly, monomer.

It localises to the cytoplasm. The enzyme catalyses (2R)-3-phosphoglycerate + ATP = (2R)-3-phospho-glyceroyl phosphate + ADP. It functions in the pathway carbohydrate degradation; glycolysis; pyruvate from D-glyceraldehyde 3-phosphate: step 2/5. The chain is Phosphoglycerate kinase from Brucella suis biovar 1 (strain 1330).